The sequence spans 673 residues: UvrABC system protein B (673 aa).

The Helicase ATP-binding domain occupies 26-414 (EGLEDGLAHQ…GDEVVDQVVR (389 aa)). 39 to 46 (GVTGSGKT) lines the ATP pocket. A Beta-hairpin motif is present at residues 92 to 115 (YYDYYQPEAYVPSSDTFIEKDASV). In terms of domain architecture, Helicase C-terminal spans 431-597 (QVDDLLSEIR…GLNKKVVDIL (167 aa)). Residues 633–668 (QQKIHELEEQMMQHAQNLEFEEAAQIRDQLHQLREL) enclose the UVR domain.

The protein belongs to the UvrB family. Forms a heterotetramer with UvrA during the search for lesions. Interacts with UvrC in an incision complex.

Its subcellular location is the cytoplasm. In terms of biological role, the UvrABC repair system catalyzes the recognition and processing of DNA lesions. A damage recognition complex composed of 2 UvrA and 2 UvrB subunits scans DNA for abnormalities. Upon binding of the UvrA(2)B(2) complex to a putative damaged site, the DNA wraps around one UvrB monomer. DNA wrap is dependent on ATP binding by UvrB and probably causes local melting of the DNA helix, facilitating insertion of UvrB beta-hairpin between the DNA strands. Then UvrB probes one DNA strand for the presence of a lesion. If a lesion is found the UvrA subunits dissociate and the UvrB-DNA preincision complex is formed. This complex is subsequently bound by UvrC and the second UvrB is released. If no lesion is found, the DNA wraps around the other UvrB subunit that will check the other stand for damage. The polypeptide is UvrABC system protein B (Salmonella typhi).